Reading from the N-terminus, the 411-residue chain is Lissencephaly-1 homolog (411 aa).

In terms of domain architecture, LisH spans Gln9–Thr41. The stretch at Thr56–Ala83 forms a coiled coil. WD repeat units lie at residues Gly106–Lys147, Gly148–Lys187, Gly191–Thr230, Gly233–Glu272, Asp275–Thr334, Gly337–Thr376, and Ala379–Arg411.

The protein belongs to the WD repeat LIS1/nudF family.

It is found in the cytoplasm. It localises to the cytoskeleton. The protein localises to the microtubule organizing center. Its subcellular location is the centrosome. In terms of biological role, positively regulates the activity of the minus-end directed microtubule motor protein dynein. May enhance dynein-mediated microtubule sliding by targeting dynein to the microtubule plus end. Required for several dynein- and microtubule-dependent processes. This Drosophila ananassae (Fruit fly) protein is Lissencephaly-1 homolog.